A 1567-amino-acid chain; its full sequence is Putative DEAH-box ATP-dependent helicase UM11114 (1567 aa).

Disordered stretches follow at residues Met-1–Lys-95 and Glu-670–Arg-734. Residues Ile-10 to Ala-20 are compositionally biased toward polar residues. Low complexity-rich tracts occupy residues Thr-39–Gln-48 and Ala-55–Ser-73. Positions Ala-74–Gly-83 are enriched in gly residues. 2 stretches are compositionally biased toward polar residues: residues Glu-670–Gly-687 and Leu-713–Tyr-726. One can recognise a Helicase ATP-binding domain in the interval Leu-746–Pro-924. An ATP-binding site is contributed by Gly-759–Thr-766. The DEAH box signature appears at Asp-871–His-874. The 182-residue stretch at Val-1003 to Arg-1184 folds into the Helicase C-terminal domain.

It belongs to the DEAD box helicase family. DEAH subfamily.

This is Putative DEAH-box ATP-dependent helicase UM11114 from Mycosarcoma maydis (Corn smut fungus).